A 1027-amino-acid polypeptide reads, in one-letter code: Error-prone DNA polymerase (1027 aa).

The protein belongs to the DNA polymerase type-C family. DnaE2 subfamily.

It localises to the cytoplasm. It catalyses the reaction DNA(n) + a 2'-deoxyribonucleoside 5'-triphosphate = DNA(n+1) + diphosphate. Its function is as follows. DNA polymerase involved in damage-induced mutagenesis and translesion synthesis (TLS). It is not the major replicative DNA polymerase. This Dechloromonas aromatica (strain RCB) protein is Error-prone DNA polymerase.